A 146-amino-acid polypeptide reads, in one-letter code: Hemoglobin subunit beta (146 aa).

Val1 bears the N-acetylvaline mark. Residues 2–146 (HLTPEEKALV…VANALAHKYH (145 aa)) form the Globin domain. The residue at position 59 (Lys59) is an N6-acetyllysine. His63 serves as a coordination point for heme b. Lys82 is modified (N6-acetyllysine). His92 contacts heme b. Position 93 is an S-nitrosocysteine (Cys93). Residue Lys144 is modified to N6-acetyllysine.

Belongs to the globin family. Heterotetramer of two alpha chains and two beta chains. Red blood cells.

In terms of biological role, involved in oxygen transport from the lung to the various peripheral tissues. The sequence is that of Hemoglobin subunit beta (HBB) from Trichechus inunguis (Amazon manatee).